The primary structure comprises 429 residues: Ribosomal RNA small subunit methyltransferase B (429 aa).

Residues 254-260 (CAAPGGK), Asp277, Asp303, and Asp322 contribute to the S-adenosyl-L-methionine site. Cys375 (nucleophile) is an active-site residue. Residues 397 to 419 (ALSETGTPDQPGQQNLPGGEEGD) are disordered. Positions 400–412 (ETGTPDQPGQQNL) are enriched in polar residues.

The protein belongs to the class I-like SAM-binding methyltransferase superfamily. RsmB/NOP family.

It is found in the cytoplasm. It carries out the reaction cytidine(967) in 16S rRNA + S-adenosyl-L-methionine = 5-methylcytidine(967) in 16S rRNA + S-adenosyl-L-homocysteine + H(+). Specifically methylates the cytosine at position 967 (m5C967) of 16S rRNA. In Salmonella typhi, this protein is Ribosomal RNA small subunit methyltransferase B.